The following is a 212-amino-acid chain: Large ribosomal subunit protein uL3 (212 aa).

Positions 128–146 (RHGASRGPMKHGSKYHRRT) are enriched in basic residues. Positions 128–164 (RHGASRGPMKHGSKYHRRTGSLGAKGPARVFKGRNLP) are disordered.

Belongs to the universal ribosomal protein uL3 family. In terms of assembly, part of the 50S ribosomal subunit. Forms a cluster with proteins L14 and L19.

Functionally, one of the primary rRNA binding proteins, it binds directly near the 3'-end of the 23S rRNA, where it nucleates assembly of the 50S subunit. The sequence is that of Large ribosomal subunit protein uL3 from Desulfitobacterium hafniense (strain Y51).